The following is a 338-amino-acid chain: 1-aminocyclopropane-1-carboxylate deaminase (338 aa).

An N6-(pyridoxal phosphate)lysine modification is found at Lys51. Ser78 (nucleophile) is an active-site residue.

It belongs to the ACC deaminase/D-cysteine desulfhydrase family. In terms of assembly, homotrimer. Pyridoxal 5'-phosphate serves as cofactor.

The catalysed reaction is 1-aminocyclopropane-1-carboxylate + H2O = 2-oxobutanoate + NH4(+). Its function is as follows. Catalyzes a cyclopropane ring-opening reaction, the irreversible conversion of 1-aminocyclopropane-1-carboxylate (ACC) to ammonia and alpha-ketobutyrate. Allows growth on ACC as a nitrogen source. This Burkholderia thailandensis (strain ATCC 700388 / DSM 13276 / CCUG 48851 / CIP 106301 / E264) protein is 1-aminocyclopropane-1-carboxylate deaminase.